We begin with the raw amino-acid sequence, 1241 residues long: ATP-dependent helicase/nuclease subunit A (1241 aa).

The UvrD-like helicase ATP-binding domain maps to 12 to 485 (SQWTDDQWKA…IDLAKNFRSR (474 aa)). 33 to 40 (AAAGSGKT) is a binding site for ATP. The UvrD-like helicase C-terminal domain maps to 505 to 805 (GEIDYDADAE…RIMTIHKSKG (301 aa)).

This sequence belongs to the helicase family. AddA subfamily. As to quaternary structure, heterodimer of AddA and AddB/RexB. It depends on Mg(2+) as a cofactor.

It carries out the reaction Couples ATP hydrolysis with the unwinding of duplex DNA by translocating in the 3'-5' direction.. The catalysed reaction is ATP + H2O = ADP + phosphate + H(+). In terms of biological role, the heterodimer acts as both an ATP-dependent DNA helicase and an ATP-dependent, dual-direction single-stranded exonuclease. Recognizes the chi site generating a DNA molecule suitable for the initiation of homologous recombination. The AddA nuclease domain is required for chi fragment generation; this subunit has the helicase and 3' -&gt; 5' nuclease activities. The chain is ATP-dependent helicase/nuclease subunit A from Bacillus cereus (strain G9842).